The following is a 333-amino-acid chain: DNA-directed RNA polymerase subunit alpha (333 aa).

The alpha N-terminal domain (alpha-NTD) stretch occupies residues 1-246 (MEKFIKINWT…AHLNIIGDVN (246 aa)). The tract at residues 263-333 (HSKTQNILIQ…YNVFLDKGEE (71 aa)) is alpha C-terminal domain (alpha-CTD).

This sequence belongs to the RNA polymerase alpha chain family. As to quaternary structure, homodimer. The RNAP catalytic core consists of 2 alpha, 1 beta, 1 beta' and 1 omega subunit. When a sigma factor is associated with the core the holoenzyme is formed, which can initiate transcription.

The catalysed reaction is RNA(n) + a ribonucleoside 5'-triphosphate = RNA(n+1) + diphosphate. Its function is as follows. DNA-dependent RNA polymerase catalyzes the transcription of DNA into RNA using the four ribonucleoside triphosphates as substrates. The sequence is that of DNA-directed RNA polymerase subunit alpha from Mycoplasma mobile (strain ATCC 43663 / 163K / NCTC 11711) (Mesomycoplasma mobile).